Here is a 365-residue protein sequence, read N- to C-terminus: tRNA-specific 2-thiouridylase MnmA (365 aa).

ATP is bound by residues 14–21 (AMSGGVDS) and leucine 40. Catalysis depends on cysteine 108, which acts as the Nucleophile. An intrachain disulfide couples cysteine 108 to cysteine 204. Glycine 132 serves as a coordination point for ATP. The interaction with tRNA stretch occupies residues 154–156 (KDQ). Cysteine 204 (cysteine persulfide intermediate) is an active-site residue.

Belongs to the MnmA/TRMU family.

It is found in the cytoplasm. It catalyses the reaction S-sulfanyl-L-cysteinyl-[protein] + uridine(34) in tRNA + AH2 + ATP = 2-thiouridine(34) in tRNA + L-cysteinyl-[protein] + A + AMP + diphosphate + H(+). Functionally, catalyzes the 2-thiolation of uridine at the wobble position (U34) of tRNA, leading to the formation of s(2)U34. The protein is tRNA-specific 2-thiouridylase MnmA of Rickettsia africae (strain ESF-5).